We begin with the raw amino-acid sequence, 767 residues long: Protein transport protein Sec23B (767 aa).

Ala2 bears the N-acetylalanine mark. 4 residues coordinate Zn(2+): Cys61, Cys66, Cys85, and Cys88. Residue Lys564 is modified to N6-acetyllysine. The stretch at 634 to 720 (PEPVLLDSSS…EHGGSQARFL (87 aa)) is one Gelsolin-like repeat.

The protein belongs to the SEC23/SEC24 family. SEC23 subfamily. COPII is composed of at least five proteins: the Sec23/24 complex, the Sec13/31 complex and Sar1. Interacts with SAR1A.

It is found in the cytoplasmic vesicle. It localises to the COPII-coated vesicle membrane. Its subcellular location is the endoplasmic reticulum membrane. The protein localises to the cytoplasm. The protein resides in the cytosol. In terms of biological role, component of the coat protein complex II (COPII) which promotes the formation of transport vesicles from the endoplasmic reticulum (ER). The coat has two main functions, the physical deformation of the endoplasmic reticulum membrane into vesicles and the selection of cargo molecules for their transport to the Golgi complex. In Mus musculus (Mouse), this protein is Protein transport protein Sec23B.